Consider the following 166-residue polypeptide: Ribosome maturation factor RimM (166 aa).

One can recognise a PRC barrel domain in the interval 94–165 (EGEYYLGKLI…TIELKVLDLL (72 aa)).

The protein belongs to the RimM family. As to quaternary structure, binds ribosomal protein uS19.

The protein resides in the cytoplasm. Functionally, an accessory protein needed during the final step in the assembly of 30S ribosomal subunit, possibly for assembly of the head region. Essential for efficient processing of 16S rRNA. May be needed both before and after RbfA during the maturation of 16S rRNA. It has affinity for free ribosomal 30S subunits but not for 70S ribosomes. The polypeptide is Ribosome maturation factor RimM (Borreliella afzelii (strain PKo) (Borrelia afzelii)).